The primary structure comprises 230 residues: Cutinase 1 (230 aa).

An N-terminal signal peptide occupies residues M1–A16. Residues L17 to L31 constitute a propeptide that is removed on maturation. The residue at position 32 (G32) is an N-D-glucuronoyl glycine. Residues C47 and C125 are joined by a disulfide bond. The active-site Nucleophile is the S136. A disulfide bridge links C187 with C194. The active site involves D191. H204 (proton donor/acceptor) is an active-site residue.

Belongs to the cutinase family. The 2 disulfide bonds play a critical role in holding the catalytic residues in juxta-position; reduction of the disulfide bridges results in the complete inactivation of the enzyme. Post-translationally, O-glycosylated; contains one mole each of mannose, arabinose, N-acetylglucosamine, and glucuronic acid.

The protein resides in the secreted. The enzyme catalyses cutin + H2O = cutin monomers.. With respect to regulation, inhibited by n-undecyl phosphonate (C11Y4). Inhibited by paraoxon. Functionally, catalyzes the hydrolysis of complex carboxylic polyesters found in the cell wall of plants. Degrades cutin, a macromolecule that forms the structure of the plant cuticle. Allows pathogenic fungi to penetrate through the cuticular barrier into the host plant during the initial stage of fungal infection. This chain is Cutinase 1 (CUT1), found in Fusarium vanettenii (Neocosmospora pisi).